We begin with the raw amino-acid sequence, 336 residues long: Homoserine O-acetyltransferase (336 aa).

The region spanning Ala-58–Asp-321 is the AB hydrolase-1 domain. The Nucleophile role is filled by Ser-147. Arg-204 serves as a coordination point for substrate. Residues Asp-286 and His-315 contribute to the active site. Asp-316 is a substrate binding site.

It belongs to the AB hydrolase superfamily. MetX family. In terms of assembly, homodimer.

The protein localises to the cytoplasm. The catalysed reaction is L-homoserine + acetyl-CoA = O-acetyl-L-homoserine + CoA. The protein operates within amino-acid biosynthesis; L-methionine biosynthesis via de novo pathway; O-acetyl-L-homoserine from L-homoserine: step 1/1. Functionally, transfers an acetyl group from acetyl-CoA to L-homoserine, forming acetyl-L-homoserine. The chain is Homoserine O-acetyltransferase from Deinococcus geothermalis (strain DSM 11300 / CIP 105573 / AG-3a).